Reading from the N-terminus, the 350-residue chain is MFMNGSSLNSSALDPSEQALQRPPWVTTTLGCFLIFTIVVDILGNLLVIFSVYRNKKLQNAGNIFVVSLAVADLVVAIYPYPLVLTSIFHRGWNLGYMHCQISGFLMGVSVIGSIFNITGIAINCYCYICHSLKYDKLYSDKNSVCYVLLIWALTVLAIVPNLFVGSLQYDPRVYSCTFEQSASSAYTIAVVFFHFILPIMIVTYCYLRIWVLVIQVRRRVKNDNRPKITPHDVRNFVTMFVVFVLFAVCWAPLNFIGLAVAISPERVVPLIPEWLFVASYFMAYFNSCLNAIVYGVLNQNFRREYKRIVVSVCTARIFFGESSNEAQERLKSKPSPLMTNNNQVKVDSV.

The Extracellular portion of the chain corresponds to 1–29 (MFMNGSSLNSSALDPSEQALQRPPWVTTT). Residues N4 and N9 are each glycosylated (N-linked (GlcNAc...) asparagine). Residues 30 to 50 (LGCFLIFTIVVDILGNLLVIF) traverse the membrane as a helical segment. At 51–63 (SVYRNKKLQNAGN) the chain is on the cytoplasmic side. Residues 64–84 (IFVVSLAVADLVVAIYPYPLV) traverse the membrane as a helical segment. Over 85–101 (LTSIFHRGWNLGYMHCQ) the chain is Extracellular. An intrachain disulfide couples C100 to C177. The helical transmembrane segment at 102-122 (ISGFLMGVSVIGSIFNITGIA) threads the bilayer. Over 123 to 144 (INCYCYICHSLKYDKLYSDKNS) the chain is Cytoplasmic. A helical transmembrane segment spans residues 145–165 (VCYVLLIWALTVLAIVPNLFV). Residues 166–187 (GSLQYDPRVYSCTFEQSASSAY) lie on the Extracellular side of the membrane. Residues 188 to 208 (TIAVVFFHFILPIMIVTYCYL) traverse the membrane as a helical segment. At 209–240 (RIWVLVIQVRRRVKNDNRPKITPHDVRNFVTM) the chain is on the cytoplasmic side. A helical membrane pass occupies residues 241–261 (FVVFVLFAVCWAPLNFIGLAV). Over 262-267 (AISPER) the chain is Extracellular. A helical membrane pass occupies residues 268-288 (VVPLIPEWLFVASYFMAYFNS). The Cytoplasmic portion of the chain corresponds to 289–350 (CLNAIVYGVL…NNNQVKVDSV (62 aa)).

This sequence belongs to the G-protein coupled receptor 1 family.

It is found in the cell membrane. High affinity receptor for melatonin. The activity of this receptor is mediated by pertussis toxin sensitive G proteins that inhibits adenylate cyclase activity. This chain is Melatonin receptor type 1A-A (mtnr1aa), found in Danio rerio (Zebrafish).